The sequence spans 425 residues: Terminal nucleotidyltransferase 5B (425 aa).

A disordered region spans residues 1 to 42; sequence MMPSESGAERRDRAAAQVGTAAATAVATAAPAGGGPDPEALS. Over residues 15-31 the composition is skewed to low complexity; it reads AAQVGTAAATAVATAAP.

Belongs to the TENT family.

The protein localises to the cytoplasm. Its subcellular location is the nucleus. The enzyme catalyses RNA(n) + ATP = RNA(n)-3'-adenine ribonucleotide + diphosphate. Catalyzes the transfer of one adenosine molecule from an ATP to an mRNA poly(A) tail bearing a 3'-OH terminal group in an ATP hydrolysis-dependent manner. May be involved in maintaining the translation efficiency of at least some genes through preventing degradation of their mRNAs. Prefers RNA molecules that are adenosine-rich close to 3'-end. In addition, may inhibit cell proliferation and cell cycle progression through ubiquitination of beta-catenin/CTNNB1. The sequence is that of Terminal nucleotidyltransferase 5B from Homo sapiens (Human).